The chain runs to 65 residues: Small ribosomal subunit protein eS17 (65 aa).

This sequence belongs to the eukaryotic ribosomal protein eS17 family.

This is Small ribosomal subunit protein eS17 from Archaeoglobus fulgidus (strain ATCC 49558 / DSM 4304 / JCM 9628 / NBRC 100126 / VC-16).